Consider the following 315-residue polypeptide: Phosphatidylglycerol--prolipoprotein diacylglyceryl transferase (315 aa).

The next 2 membrane-spanning stretches (helical) occupy residues phenylalanine 19–leucine 39 and valine 93–leucine 113. Arginine 141 serves as a coordination point for a 1,2-diacyl-sn-glycero-3-phospho-(1'-sn-glycerol). The next 2 membrane-spanning stretches (helical) occupy residues leucine 188–isoleucine 208 and valine 256–tyrosine 276.

Belongs to the Lgt family.

The protein resides in the cell membrane. It catalyses the reaction L-cysteinyl-[prolipoprotein] + a 1,2-diacyl-sn-glycero-3-phospho-(1'-sn-glycerol) = an S-1,2-diacyl-sn-glyceryl-L-cysteinyl-[prolipoprotein] + sn-glycerol 1-phosphate + H(+). It participates in protein modification; lipoprotein biosynthesis (diacylglyceryl transfer). Its function is as follows. Catalyzes the transfer of the diacylglyceryl group from phosphatidylglycerol to the sulfhydryl group of the N-terminal cysteine of a prolipoprotein, the first step in the formation of mature lipoproteins. The chain is Phosphatidylglycerol--prolipoprotein diacylglyceryl transferase from Bifidobacterium longum (strain NCC 2705).